Reading from the N-terminus, the 806-residue chain is Ent-atiserene synthase KSL4, chloroplastic (806 aa).

A chloroplast-targeting transit peptide spans 1–75 (MGIVALILIK…AKLFKKNEVC (75 aa)). The interval 33–56 (ASLAGSGLPKTTPPKTASLQSHSP) is disordered. The segment covering 45-55 (PPKTASLQSHS) has biased composition (polar residues). 4 residues coordinate Mg(2+): aspartate 556, aspartate 560, asparagine 700, and glutamate 708. Positions 556-560 (DDLFD) match the DDXXD motif motif.

Belongs to the terpene synthase family. The cofactor is Mg(2+). In terms of tissue distribution, highly expressed in leaves, and, at low levels, in roots, stems and flowers.

The protein resides in the plastid. Its subcellular location is the chloroplast. It carries out the reaction ent-copalyl diphosphate = ent-atiserene + diphosphate. Its pathway is secondary metabolite biosynthesis; terpenoid biosynthesis. Its function is as follows. Involved in the biosynthesis of ent-kaurene diterpenoids natural products such as oridonin, miltiradiene, eriocalyxin B and nezukol, known to exhibit antitumor, anti-inflammatory and antibacterial activities. Catalyzes the conversion of ent-copalyl diphosphate (ent-CPP) to ent-atiserene. This Isodon rubescens (Rabdosia rubescens) protein is Ent-atiserene synthase KSL4, chloroplastic.